A 544-amino-acid polypeptide reads, in one-letter code: Prolyl 4-hydroxylase subunit alpha-3 (544 aa).

The N-terminal stretch at methionine 1–alanine 24 is a signal peptide. One copy of the TPR repeat lies at glutamate 227–asparagine 260. A glycan (N-linked (GlcNAc...) asparagine) is linked at asparagine 242. The region spanning tyrosine 422–glutamate 529 is the Fe2OG dioxygenase domain. Histidine 440 and aspartate 442 together coordinate Fe cation. N-linked (GlcNAc...) asparagine glycosylation occurs at asparagine 482. Residue histidine 510 participates in Fe cation binding. Lysine 520 contributes to the 2-oxoglutarate binding site.

The protein belongs to the P4HA family. Heterotetramer of two alpha-3 chains and two beta chains (the beta chain is the multi-functional PDI). Fe(2+) is required as a cofactor. It depends on L-ascorbate as a cofactor. N-glycosylation plays no role in the catalytic activity.

The protein resides in the endoplasmic reticulum lumen. It catalyses the reaction L-prolyl-[collagen] + 2-oxoglutarate + O2 = trans-4-hydroxy-L-prolyl-[collagen] + succinate + CO2. Its function is as follows. Catalyzes the post-translational formation of 4-hydroxyproline in -Xaa-Pro-Gly- sequences in collagens and other proteins. This is Prolyl 4-hydroxylase subunit alpha-3 (P4ha3) from Rattus norvegicus (Rat).